A 593-amino-acid polypeptide reads, in one-letter code: Proteasome-associated ATPase (593 aa).

Residues 5–94 (DDADSRAARW…KEEIDRLAQP (90 aa)) adopt a coiled-coil conformation. Residue 281 to 286 (GCGKTL) coordinates ATP. Residues 574-593 (GKGADAGRSIETASNTGQYL) are disordered. The segment covering 584–593 (ETASNTGQYL) has biased composition (polar residues). Residues 592–593 (YL) form a docks into pockets in the proteasome alpha-ring region.

This sequence belongs to the AAA ATPase family. In terms of assembly, homohexamer. Assembles into a hexameric ring structure that caps the 20S proteasome core. Strongly interacts with the prokaryotic ubiquitin-like protein Pup through a hydrophobic interface; the interacting region of ARC lies in its N-terminal coiled-coil domain. There is one Pup binding site per ARC hexamer ring. Upon ATP-binding, the C-terminus of ARC interacts with the alpha-rings of the proteasome core, possibly by binding to the intersubunit pockets.

Its pathway is protein degradation; proteasomal Pup-dependent pathway. ATPase which is responsible for recognizing, binding, unfolding and translocation of pupylated proteins into the bacterial 20S proteasome core particle. May be essential for opening the gate of the 20S proteasome via an interaction with its C-terminus, thereby allowing substrate entry and access to the site of proteolysis. Thus, the C-termini of the proteasomal ATPase may function like a 'key in a lock' to induce gate opening and therefore regulate proteolysis. This is Proteasome-associated ATPase from Salinispora tropica (strain ATCC BAA-916 / DSM 44818 / JCM 13857 / NBRC 105044 / CNB-440).